The primary structure comprises 314 residues: Vacuolar membrane protein SCY_4732 (314 aa).

A disordered region spans residues 32–61; that stretch reads KPTSSVVSETSSKSLPSLTSSAFSTSSGTT. The chain crosses the membrane as a helical span at residues 93–113; sequence VYIAVGAVIGAIFISILIWWL. 3 positions are modified to phosphoserine: serine 148, serine 254, and serine 274. Residues 240–309 are disordered; sequence EERKLNLNRP…PSMFLDDVLN (70 aa). Basic and acidic residues predominate over residues 254-269; it reads SPERKEKKINSMEGYH.

The protein belongs to the PRM5 family.

It localises to the vacuole membrane. This is Vacuolar membrane protein SCY_4732 from Saccharomyces cerevisiae (strain YJM789) (Baker's yeast).